Consider the following 804-residue polypeptide: Protein translocase subunit SecA (804 aa).

ATP contacts are provided by residues Q100, 118-122 (GEGKT), and D508.

The protein belongs to the SecA family. Monomer and homodimer. Part of the essential Sec protein translocation apparatus which comprises SecA, SecYEG and auxiliary proteins SecDF. Other proteins may also be involved.

The protein resides in the cell membrane. It is found in the cytoplasm. It catalyses the reaction ATP + H2O + cellular proteinSide 1 = ADP + phosphate + cellular proteinSide 2.. Part of the Sec protein translocase complex. Interacts with the SecYEG preprotein conducting channel. Has a central role in coupling the hydrolysis of ATP to the transfer of proteins into and across the cell membrane, serving as an ATP-driven molecular motor driving the stepwise translocation of polypeptide chains across the membrane. This chain is Protein translocase subunit SecA, found in Leuconostoc citreum (strain KM20).